The sequence spans 310 residues: Protein-L-isoaspartate O-methyltransferase (310 aa).

Disordered stretches follow at residues Met1–Lys42 and Ser64–Val90. Positions Glu14 to Ala32 are enriched in basic and acidic residues. Positions Ser64–Ala81 are enriched in low complexity. The active site involves Ser157.

Belongs to the methyltransferase superfamily. L-isoaspartyl/D-aspartyl protein methyltransferase family.

It localises to the cytoplasm. It catalyses the reaction [protein]-L-isoaspartate + S-adenosyl-L-methionine = [protein]-L-isoaspartate alpha-methyl ester + S-adenosyl-L-homocysteine. Functionally, catalyzes the methyl esterification of L-isoaspartyl residues in peptides and proteins that result from spontaneous decomposition of normal L-aspartyl and L-asparaginyl residues. It plays a role in the repair and/or degradation of damaged proteins. This Burkholderia lata (strain ATCC 17760 / DSM 23089 / LMG 22485 / NCIMB 9086 / R18194 / 383) protein is Protein-L-isoaspartate O-methyltransferase.